We begin with the raw amino-acid sequence, 621 residues long: Nitrate reductase [NADH] 1 (621 aa).

Positions 249–324 constitute a Cytochrome b5 heme-binding domain; sequence GKEFTMSEVR…LDTYRIGELI (76 aa). Heme contacts are provided by His284 and His307. Residues 361-473 enclose the FAD-binding FR-type domain; sequence REKIHCRLVG…KGPLGHVEYT (113 aa). Residues 413–416, 430–432, Phe435, 447–449, Ser497, and Thr500 each bind FAD; these read RAYT, LVK, and LMT.

The protein belongs to the nitrate reductase family. In terms of assembly, homodimer. Requires FAD as cofactor. It depends on heme as a cofactor. The cofactor is Mo-molybdopterin.

It carries out the reaction nitrite + NAD(+) + H2O = nitrate + NADH + H(+). Functionally, nitrate reductase is a key enzyme involved in the first step of nitrate assimilation in plants, fungi and bacteria. In Zea mays (Maize), this protein is Nitrate reductase [NADH] 1.